An 829-amino-acid polypeptide reads, in one-letter code: Leucine--tRNA ligase (829 aa).

The short motif at 42-52 (PYPSGRIHMGH) is the 'HIGH' region element. Positions 584–588 (KMSKS) match the 'KMSKS' region motif. Residue Lys-587 participates in ATP binding.

Belongs to the class-I aminoacyl-tRNA synthetase family.

It is found in the cytoplasm. The catalysed reaction is tRNA(Leu) + L-leucine + ATP = L-leucyl-tRNA(Leu) + AMP + diphosphate. The polypeptide is Leucine--tRNA ligase (Syntrophobacter fumaroxidans (strain DSM 10017 / MPOB)).